Reading from the N-terminus, the 1404-residue chain is G8 domain-containing protein DDB_G0286897 (1404 aa).

The first 20 residues, 1–20 (MNYFKYFIFVVFLFFTIVKC), serve as a signal peptide directing secretion. 2 helical membrane-spanning segments follow: residues 97–117 (LVGFNWISMLIASLLSIGLFA) and 128–148 (IIILIIGFICLSLMINGIQSI). Residues asparagine 352, asparagine 365, asparagine 413, asparagine 481, asparagine 639, asparagine 838, asparagine 979, asparagine 1003, asparagine 1017, asparagine 1253, and asparagine 1334 are each glycosylated (N-linked (GlcNAc...) asparagine). The region spanning 553-679 (STWASGFVPL…YHNTWTKLST (127 aa)) is the G8 domain.

The protein belongs to the comF family.

It localises to the membrane. In Dictyostelium discoideum (Social amoeba), this protein is G8 domain-containing protein DDB_G0286897.